A 130-amino-acid polypeptide reads, in one-letter code: Large ribosomal subunit protein bL17 (130 aa).

Belongs to the bacterial ribosomal protein bL17 family. Part of the 50S ribosomal subunit. Contacts protein L32.

The protein is Large ribosomal subunit protein bL17 of Delftia acidovorans (strain DSM 14801 / SPH-1).